The primary structure comprises 711 residues: Polyribonucleotide nucleotidyltransferase (711 aa).

Positions 486 and 492 each coordinate Mg(2+). The 60-residue stretch at Pro553–Ile612 folds into the KH domain. Residues Gly622–Lys690 enclose the S1 motif domain. The segment at Ile689–Glu711 is disordered. Residues Glu694 to Glu711 show a composition bias toward low complexity.

Belongs to the polyribonucleotide nucleotidyltransferase family. Component of the RNA degradosome, which is a multiprotein complex involved in RNA processing and mRNA degradation. Mg(2+) is required as a cofactor.

The protein resides in the cytoplasm. It catalyses the reaction RNA(n+1) + phosphate = RNA(n) + a ribonucleoside 5'-diphosphate. Functionally, involved in mRNA degradation. Catalyzes the phosphorolysis of single-stranded polyribonucleotides processively in the 3'- to 5'-direction. This Escherichia coli (strain ATCC 8739 / DSM 1576 / NBRC 3972 / NCIMB 8545 / WDCM 00012 / Crooks) protein is Polyribonucleotide nucleotidyltransferase.